The chain runs to 161 residues: Succinate dehydrogenase assembly factor 2, mitochondrial (161 aa).

The transit peptide at 1 to 31 (MSLLRVTRSSGHLSAVCRLPARSISTTSILL) directs the protein to the mitochondrion.

It belongs to the SDHAF2 family. In terms of assembly, interacts with the flavoprotein subunit within the SDH catalytic dimer.

The protein resides in the mitochondrion matrix. In terms of biological role, plays an essential role in the assembly of succinate dehydrogenase (SDH), an enzyme complex (also referred to as respiratory complex II) that is a component of both the tricarboxylic acid (TCA) cycle and the mitochondrial electron transport chain, and which couples the oxidation of succinate to fumarate with the reduction of ubiquinone (coenzyme Q) to ubiquinol. Required for flavinylation (covalent attachment of FAD) of the flavoprotein subunit of the SDH catalytic dimer. The chain is Succinate dehydrogenase assembly factor 2, mitochondrial from Aedes aegypti (Yellowfever mosquito).